Here is a 473-residue protein sequence, read N- to C-terminus: Siroheme synthase (473 aa).

The segment at Met1–Leu203 is precorrin-2 dehydrogenase /sirohydrochlorin ferrochelatase. NAD(+)-binding positions include Ala22–Val23 and Pro43–Arg44. A Phosphoserine modification is found at Ser128. The segment at Gly216–Ala473 is uroporphyrinogen-III C-methyltransferase. Pro225 serves as a coordination point for S-adenosyl-L-methionine. The active-site Proton acceptor is the Asp248. Lys270 (proton donor) is an active-site residue. Residues Gly302 to Asp304, Ile307, Thr332 to Ala333, Met384, and Gly413 contribute to the S-adenosyl-L-methionine site.

It in the N-terminal section; belongs to the precorrin-2 dehydrogenase / sirohydrochlorin ferrochelatase family. This sequence in the C-terminal section; belongs to the precorrin methyltransferase family.

The enzyme catalyses uroporphyrinogen III + 2 S-adenosyl-L-methionine = precorrin-2 + 2 S-adenosyl-L-homocysteine + H(+). The catalysed reaction is precorrin-2 + NAD(+) = sirohydrochlorin + NADH + 2 H(+). It carries out the reaction siroheme + 2 H(+) = sirohydrochlorin + Fe(2+). It participates in cofactor biosynthesis; adenosylcobalamin biosynthesis; precorrin-2 from uroporphyrinogen III: step 1/1. It functions in the pathway cofactor biosynthesis; adenosylcobalamin biosynthesis; sirohydrochlorin from precorrin-2: step 1/1. Its pathway is porphyrin-containing compound metabolism; siroheme biosynthesis; precorrin-2 from uroporphyrinogen III: step 1/1. The protein operates within porphyrin-containing compound metabolism; siroheme biosynthesis; siroheme from sirohydrochlorin: step 1/1. It participates in porphyrin-containing compound metabolism; siroheme biosynthesis; sirohydrochlorin from precorrin-2: step 1/1. Functionally, multifunctional enzyme that catalyzes the SAM-dependent methylations of uroporphyrinogen III at position C-2 and C-7 to form precorrin-2 via precorrin-1. Then it catalyzes the NAD-dependent ring dehydrogenation of precorrin-2 to yield sirohydrochlorin. Finally, it catalyzes the ferrochelation of sirohydrochlorin to yield siroheme. In Bordetella pertussis (strain Tohama I / ATCC BAA-589 / NCTC 13251), this protein is Siroheme synthase.